Here is a 175-residue protein sequence, read N- to C-terminus: Peptide deformylase (175 aa).

2 residues coordinate Fe cation: Cys-99 and His-141. Glu-142 is an active-site residue. His-145 contacts Fe cation.

The protein belongs to the polypeptide deformylase family. Requires Fe(2+) as cofactor.

It catalyses the reaction N-terminal N-formyl-L-methionyl-[peptide] + H2O = N-terminal L-methionyl-[peptide] + formate. In terms of biological role, removes the formyl group from the N-terminal Met of newly synthesized proteins. Requires at least a dipeptide for an efficient rate of reaction. N-terminal L-methionine is a prerequisite for activity but the enzyme has broad specificity at other positions. The chain is Peptide deformylase from Rickettsia akari (strain Hartford).